The sequence spans 134 residues: uncharacterized protein (134 aa).

The region spanning 10 to 70 (KETRQRIIDA…AVLASRQHPL (61 aa)) is the HTH tetR-type domain. The H-T-H motif DNA-binding region spans 33–52 (TLDQIARKAGVTRGAVYWHF).

Its function is as follows. Unknown, does not seem to be involved in regulation of the ttgGHI or ttgVW operons. This is an uncharacterized protein from Pseudomonas putida (strain DOT-T1E).